The chain runs to 130 residues: Large ribosomal subunit protein bL21 (130 aa).

This sequence belongs to the bacterial ribosomal protein bL21 family. As to quaternary structure, part of the 50S ribosomal subunit. Contacts protein L20.

In terms of biological role, this protein binds to 23S rRNA in the presence of protein L20. The protein is Large ribosomal subunit protein bL21 of Trichormus variabilis (strain ATCC 29413 / PCC 7937) (Anabaena variabilis).